A 3412-amino-acid chain; its full sequence is Genome polyprotein (3412 aa).

The Cytoplasmic segment spans residues 1-104; sequence MSGRKAQGKT…LSSRKRRSNE (104 aa). Residues 38–72 form a hydrophobic; homodimerization of capsid protein C region; the sequence is PGPSRGVQGFIFFFLFNILTGKKLTAHLKKLWRML. A propeptide spans 102–121 (ER anchor for the capsid protein C, removed in mature form by serine protease NS3); it reads SNEMALFPLLLLGLLALSGG. The helical transmembrane segment at 105–125 threads the bilayer; that stretch reads MALFPLLLLGLLALSGGVTLV. At 126–244 the chain is on the extracellular side; it reads RKNRWLLLNV…GERQLQKIER (119 aa). N-linked (GlcNAc...) asparagine; by host glycosylation is found at N134 and N150. Residues 245 to 265 traverse the membrane as a helical segment; the sequence is WLVRNPFFAVTALAIAYLVGN. The Cytoplasmic segment spans residues 266–270; sequence NTTQR. The chain crosses the membrane as a helical span at residues 271–285; that stretch reads VVIALLVLAVGPAYS. The Extracellular segment spans residues 286 to 730; that stretch reads AHCIGITDRD…TVFGSAFQGL (445 aa). 8 disulfides stabilise this stretch: C288–C315, C345–C401, C345–C406, C359–C390, C377–C401, C377–C406, C467–C568, and C585–C615. The segment at 383-396 is fusion peptide; sequence DRGWGNGCGLFGKG. The chain crosses the membrane as a helical span at residues 731–751; it reads FGGLSWITKVIMGAVLIWVGI. Over 752-757 the chain is Extracellular; that stretch reads NTRNMT. The chain crosses the membrane as a helical span at residues 758–778; sequence MSMSMILVGVIMMFLSLGVGA. Topologically, residues 779-1132 are extracellular; it reads DQGCAVNFGK…LVRSWVTAGE (354 aa). 6 disulfides stabilise this stretch: C782–C793, C833–C921, C957–C1002, C1058–C1107, C1069–C1091, and C1090–C1094. N-linked (GlcNAc...) asparagine; by host glycans are attached at residues N908 and N986. The helical transmembrane segment at 1133–1153 threads the bilayer; the sequence is VHAVPFGLVSMMIAMEVVLRR. The Cytoplasmic portion of the chain corresponds to 1154 to 1201; it reads RQGPKQMLVGGVVLLGAMLVGQVTVLDLVKFVVAVGLHFHEINNGGDA. A helical membrane pass occupies residues 1202-1222; the sequence is MYMALIASFSIRPGLLMGFGL. Over 1223-1287 the chain is Lumenal; that stretch reads RTLWSPRERL…ILPLMALMTP (65 aa). A helical transmembrane segment spans residues 1288-1308; it reads MTMHEVRMATMLFCTVVIIGV. Residues 1309–1355 lie on the Cytoplasmic side of the membrane; sequence LHQNSKDTSMQKTIPIVALTLTSYMGLTQPFLGLCAYMSTQVFGRRS. The helical transmembrane segment at 1356–1376 threads the bilayer; sequence IPVNEALAAAGLVGVLAGLAF. Over 1377 to 1378 the chain is Lumenal; the sequence is QD. The chain crosses the membrane as a helical span at residues 1379-1399; it reads MENFLGPIAVGGILMMLVSVA. Over 1400 to 1456 the chain is Cytoplasmic; the sequence is GRVDGLELKKLGEISWEEEAEISGSSSRYDVALSEQGEFKLLSEDKVPWDQIVMTSL. The tract at residues 1407 to 1446 is interacts with and activates NS3 protease; the sequence is LKKLGEISWEEEAEISGSSSRYDVALSEQGEFKLLSEDKV. The helical intramembrane region spans 1457–1477; sequence ALVGAAIHPFALLLVLGGWIL. The Cytoplasmic segment spans residues 1478–2157; the sequence is HIKGARRSGD…RNALSMMPEA (680 aa). Positions 1485-1665 constitute a Peptidase S7 domain; that stretch reads SGDVLWDIPT…ELKEESKEEL (181 aa). Residues H1537, D1561, and S1622 each act as charge relay system; for serine protease NS3 activity in the active site. A Helicase ATP-binding domain is found at 1669-1825; the sequence is PTMLKKGMTT…HSNGEIEDVQ (157 aa). The interval 1673 to 1676 is important for RNA-binding; sequence KKGM. ATP is bound at residue 1682 to 1689; that stretch reads FHPGAGKT. A DEAH box motif is present at residues 1773 to 1776; the sequence is DEAH. The region spanning 1836 to 1997 is the Helicase C-terminal domain; that stretch reads GHEWILADKR…VRGGMVAPLY (162 aa). K1877 bears the N6-acetyllysine; by host mark. Residues 1942 to 1963 form a disordered region; it reads AAQRRGRIGRNPNRDGDSYYYS. Residues 2158–2178 form a helical membrane-spanning segment; sequence MTIVMLFLLAGLLTSGAVIFF. Topologically, residues 2179–2186 are lumenal; sequence MSPKGMSR. The segment at residues 2187 to 2207 is an intramembrane region (helical); the sequence is MSMAMGTMAGSGYLMFLGGVK. Residues 2208 to 2209 lie on the Lumenal side of the membrane; that stretch reads PT. Residues 2210–2230 traverse the membrane as a helical segment; it reads HISYVMLIFFVLMVVVIPEPG. The Cytoplasmic portion of the chain corresponds to 2231–2241; it reads QQRTIQDNQVA. A helical membrane pass occupies residues 2242–2262; that stretch reads YLIIGILTLLSVVAANELGML. The Lumenal segment spans residues 2263-2293; that stretch reads EKTKEDFFGKRDITTPSGAIPWSWPDLDLKP. The segment at residues 2294–2314 is an intramembrane region (helical); that stretch reads GAAWTVYVGIVTMLSPMLHHW. At 2315–2360 the chain is on the lumenal side; sequence IKVEYGNLSLSGIAQSASVLSFMDKGIPFMKMNISVVILLVSGWNS. Residues 2361 to 2380 traverse the membrane as a helical segment; that stretch reads ITVIPLLCGIGGAMLHWTLI. Residues 2381-2421 are Cytoplasmic-facing; sequence LPGIKAQQSKLAQKRVFHGVAKNPVVDGNPTADIEEAPEMP. Residues 2422-2442 traverse the membrane as a helical segment; sequence ALYEKKLALYLLLALSLMSVA. Residues 2443-2445 lie on the Lumenal side of the membrane; it reads MCR. Residues 2446 to 2466 traverse the membrane as a helical segment; that stretch reads TPFSLAEGIVLSSAALGPLIE. The Cytoplasmic portion of the chain corresponds to 2467–3411; the sequence is GNTSLLWNGP…VDADLQPGEL (945 aa). An mRNA cap 0-1 NS5-type MT domain is found at 2508 to 2772; that stretch reads GSASGKTLGE…DVILPIGTRS (265 aa). S2563 provides a ligand contact to S-adenosyl-L-methionine. Position 2563 is a phosphoserine (S2563). The For 2'-O-MTase activity role is filled by K2568. S-adenosyl-L-methionine is bound by residues G2593, W2594, T2611, L2612, D2638, and V2639. The active-site For 2'-O-MTase activity is D2653. I2654 provides a ligand contact to S-adenosyl-L-methionine. Catalysis depends on for 2'-O-MTase activity residues K2689 and E2725. Y2727 is an S-adenosyl-L-methionine binding site. Positions 2879-2912 match the Nuclear localization signal motif; it reads RKIMKVVNRWLFRHLSREKNPRLCTKEEFIAKVR. Residues E2946, H2950, C2955, and C2958 each contribute to the Zn(2+) site. The RdRp catalytic domain occupies 3036–3188; the sequence is GGFYADDTAG…RPVDDRFGLA (153 aa). Zn(2+)-binding residues include H3223, C3239, and C3358.

This sequence in the N-terminal section; belongs to the class I-like SAM-binding methyltransferase superfamily. mRNA cap 0-1 NS5-type methyltransferase family. As to quaternary structure, homodimer. Interacts (via N-terminus) with host EXOC1 (via C-terminus); this interaction results in EXOC1 degradation through the proteasome degradation pathway. In terms of assembly, forms heterodimers with envelope protein E in the endoplasmic reticulum and Golgi. Homodimer; in the endoplasmic reticulum and Golgi. Interacts with protein prM. Interacts with non-structural protein 1. As to quaternary structure, homodimer; Homohexamer when secreted. Interacts with envelope protein E. In terms of assembly, interacts (via N-terminus) with serine protease NS3. Forms a heterodimer with serine protease NS3. May form homooligomers. As to quaternary structure, forms a heterodimer with NS2B. Interacts with non-structural protein 2A (via N-terminus). Interacts with NS4B. Interacts with unphosphorylated RNA-directed RNA polymerase NS5; this interaction stimulates RNA-directed RNA polymerase NS5 guanylyltransferase activity. NS3 interacts with host PDCD6IP; this interaction contributes to virion release. In terms of assembly, interacts with serine protease NS3. Homodimer. Interacts with host STAT2; this interaction prevents the establishment of cellular antiviral state. Interacts with serine protease NS3. Interacts with host TRIM23; this interaction leads to NS5 ubiquitination. In terms of processing, specific enzymatic cleavages in vivo yield mature proteins. The nascent capsid protein C contains a C-terminal hydrophobic domain that act as a signal sequence for translocation of prM into the lumen of the ER. Mature capsid protein C is cleaved at a site upstream of this hydrophobic domain by NS3. prM is cleaved in post-Golgi vesicles by a host furin, releasing the mature small envelope protein M, and peptide pr. Non-structural protein 2A-alpha, a C-terminally truncated form of non-structural protein 2A, results from partial cleavage by NS3. Specific enzymatic cleavages in vivo yield mature proteins peptide 2K acts as a signal sequence and is removed from the N-terminus of NS4B by the host signal peptidase in the ER lumen. Signal cleavage at the 2K-4B site requires a prior NS3 protease-mediated cleavage at the 4A-2K site. Post-translationally, cleaved in post-Golgi vesicles by a host furin, releasing the mature small envelope protein M, and peptide pr. This cleavage is incomplete as up to 30% of viral particles still carry uncleaved prM. N-glycosylated. In terms of processing, N-glycosylated. The excreted form is glycosylated and this is required for efficient secretion of the protein from infected cells. Post-translationally, polyubiquitinated; ubiquitination is probably mediated by host TRIM23 and is prerequisite for NS5-STAT2 interaction. NS5 is not ISGylated or sumoylated. Acetylated by host KAT5. Acetylation modulates NS3 RNA-binding and unwinding activities and plays an important positive role for viral replication. In terms of processing, phosphorylated on serines residues. This phosphorylation may trigger NS5 nuclear localization.

It is found in the virion. The protein localises to the host nucleus. Its subcellular location is the host cytoplasm. The protein resides in the host perinuclear region. It localises to the secreted. It is found in the virion membrane. The protein localises to the host endoplasmic reticulum membrane. The catalysed reaction is Selective hydrolysis of -Xaa-Xaa-|-Yaa- bonds in which each of the Xaa can be either Arg or Lys and Yaa can be either Ser or Ala.. It catalyses the reaction RNA(n) + a ribonucleoside 5'-triphosphate = RNA(n+1) + diphosphate. The enzyme catalyses a ribonucleoside 5'-triphosphate + H2O = a ribonucleoside 5'-diphosphate + phosphate + H(+). It carries out the reaction ATP + H2O = ADP + phosphate + H(+). The catalysed reaction is a 5'-end (5'-triphosphoguanosine)-ribonucleoside in mRNA + S-adenosyl-L-methionine = a 5'-end (N(7)-methyl 5'-triphosphoguanosine)-ribonucleoside in mRNA + S-adenosyl-L-homocysteine. It catalyses the reaction a 5'-end (N(7)-methyl 5'-triphosphoguanosine)-ribonucleoside in mRNA + S-adenosyl-L-methionine = a 5'-end (N(7)-methyl 5'-triphosphoguanosine)-(2'-O-methyl-ribonucleoside) in mRNA + S-adenosyl-L-homocysteine + H(+). In terms of biological role, plays a role in virus budding by binding to the cell membrane and gathering the viral RNA into a nucleocapsid that forms the core of a mature virus particle. During virus entry, may induce genome penetration into the host cytoplasm after hemifusion induced by the surface proteins. Can migrate to the cell nucleus where it modulates host functions. Functionally, inhibits RNA silencing by interfering with host Dicer. Prevents premature fusion activity of envelope proteins in trans-Golgi by binding to envelope protein E at pH6.0. After virion release in extracellular space, gets dissociated from E dimers. Its function is as follows. Acts as a chaperone for envelope protein E during intracellular virion assembly by masking and inactivating envelope protein E fusion peptide. prM is the only viral peptide matured by host furin in the trans-Golgi network probably to avoid catastrophic activation of the viral fusion activity in acidic Golgi compartment prior to virion release. prM-E cleavage is inefficient, and many virions are only partially matured. These uncleaved prM would play a role in immune evasion. In terms of biological role, may play a role in virus budding. Exerts cytotoxic effects by activating a mitochondrial apoptotic pathway through M ectodomain. May display a viroporin activity. Functionally, binds to host cell surface receptor and mediates fusion between viral and cellular membranes. Envelope protein is synthesized in the endoplasmic reticulum in the form of heterodimer with protein prM. They play a role in virion budding in the ER, and the newly formed immature particle is covered with 60 spikes composed of heterodimer between precursor prM and envelope protein E. The virion is transported to the Golgi apparatus where the low pH causes dissociation of PrM-E heterodimers and formation of E homodimers. prM-E cleavage is inefficient, and many virions are only partially matured. These uncleaved prM would play a role in immune evasion. Involved in immune evasion, pathogenesis and viral replication. Once cleaved off the polyprotein, is targeted to three destinations: the viral replication cycle, the plasma membrane and the extracellular compartment. Essential for viral replication. Required for formation of the replication complex and recruitment of other non-structural proteins to the ER-derived membrane structures. Excreted as a hexameric lipoparticle that plays a role against host immune response. Antagonizing the complement function. Binds to the host macrophages and dendritic cells. Inhibits signal transduction originating from Toll-like receptor 3 (TLR3). Its function is as follows. Component of the viral RNA replication complex that functions in virion assembly and antagonizes the host immune response. In terms of biological role, required cofactor for the serine protease function of NS3. May have membrane-destabilizing activity and form viroporins. Functionally, displays three enzymatic activities: serine protease, NTPase and RNA helicase. NS3 serine protease, in association with NS2B, performs its autocleavage and cleaves the polyprotein at dibasic sites in the cytoplasm: C-prM, NS2A-NS2B, NS2B-NS3, NS3-NS4A, NS4A-2K and NS4B-NS5. NS3 RNA helicase binds RNA and unwinds dsRNA in the 3' to 5' direction. Also plays a role in virus assembly. Regulates the ATPase activity of the NS3 helicase activity. NS4A allows NS3 helicase to conserve energy during unwinding. Its function is as follows. Functions as a signal peptide for NS4B and is required for the interferon antagonism activity of the latter. In terms of biological role, induces the formation of ER-derived membrane vesicles where the viral replication takes place. Inhibits interferon (IFN)-induced host STAT1 phosphorylation and nuclear translocation, thereby preventing the establishment of cellular antiviral state by blocking the IFN-alpha/beta pathway. Functionally, replicates the viral (+) and (-) RNA genome, and performs the capping of genomes in the cytoplasm. NS5 methylates viral RNA cap at guanine N-7 and ribose 2'-O positions. Besides its role in RNA genome replication, also prevents the establishment of cellular antiviral state by blocking the interferon-alpha/beta (IFN-alpha/beta) signaling pathway. IFN-I induces binding of NS5 to host IFN-activated transcription factor STAT2, preventing its transcriptional activity. Host TRIM23 is the E3 ligase that interacts with and polyubiquitinates NS5 to promote its binding to STAT2 and trigger IFN-I signaling inhibition. The protein is Genome polyprotein of Aedes aegypti (Yellowfever mosquito).